Consider the following 195-residue polypeptide: Imidazoleglycerol-phosphate dehydratase (195 aa).

This sequence belongs to the imidazoleglycerol-phosphate dehydratase family.

It localises to the cytoplasm. The catalysed reaction is D-erythro-1-(imidazol-4-yl)glycerol 3-phosphate = 3-(imidazol-4-yl)-2-oxopropyl phosphate + H2O. Its pathway is amino-acid biosynthesis; L-histidine biosynthesis; L-histidine from 5-phospho-alpha-D-ribose 1-diphosphate: step 6/9. This chain is Imidazoleglycerol-phosphate dehydratase, found in Burkholderia cenocepacia (strain ATCC BAA-245 / DSM 16553 / LMG 16656 / NCTC 13227 / J2315 / CF5610) (Burkholderia cepacia (strain J2315)).